The primary structure comprises 356 residues: Probable dual-specificity RNA methyltransferase RlmN (356 aa).

Glu-100 functions as the Proton acceptor in the catalytic mechanism. Residues 106 to 340 enclose the Radical SAM core domain; the sequence is TQQRLTVCLS…VSLRASRGLD (235 aa). Cys-113 and Cys-345 are joined by a disulfide. [4Fe-4S] cluster-binding residues include Cys-120, Cys-124, and Cys-127. S-adenosyl-L-methionine is bound by residues 167-168, Ser-197, 226-228, and Asn-302; these read GE and SLH. Catalysis depends on Cys-345, which acts as the S-methylcysteine intermediate.

It belongs to the radical SAM superfamily. RlmN family. [4Fe-4S] cluster is required as a cofactor.

Its subcellular location is the cytoplasm. It catalyses the reaction adenosine(2503) in 23S rRNA + 2 reduced [2Fe-2S]-[ferredoxin] + 2 S-adenosyl-L-methionine = 2-methyladenosine(2503) in 23S rRNA + 5'-deoxyadenosine + L-methionine + 2 oxidized [2Fe-2S]-[ferredoxin] + S-adenosyl-L-homocysteine. It carries out the reaction adenosine(37) in tRNA + 2 reduced [2Fe-2S]-[ferredoxin] + 2 S-adenosyl-L-methionine = 2-methyladenosine(37) in tRNA + 5'-deoxyadenosine + L-methionine + 2 oxidized [2Fe-2S]-[ferredoxin] + S-adenosyl-L-homocysteine. Its function is as follows. Specifically methylates position 2 of adenine 2503 in 23S rRNA and position 2 of adenine 37 in tRNAs. This is Probable dual-specificity RNA methyltransferase RlmN from Prochlorococcus marinus (strain MIT 9303).